The chain runs to 534 residues: Pentatricopeptide repeat-containing protein At5g08305 (534 aa).

11 PPR repeats span residues 41–71 (PFVSQTLSFSALSSSGDVDYAYKFLSKLSDP), 72–106 (PNYGWNFVIRGFSNSRNPEKSISVYIQMLRFGLLP), 107–141 (DHMTYPFLMKSSSRLSNRKLGGSLHCSVVKSGLEW), 142–172 (DLFICNTLIHMYGSFRDQASARKLFDEMPHK), 173–203 (NLVTWNSILDAYAKSGDVVSARLVFDEMSER), 204–238 (DVVTWSSMIDGYVKRGEYNKALEIFDQMMRMGSSK), 240–274 (NEVTMVSVICACAHLGALNRGKTVHRYILDVHLPL), 275–305 (TVILQTSLIDMYAKCGSIGDAWSVFYRASVK), 308–342 (DALMWNAIIGGLASHGFIRESLQLFHKMRESKIDP), 343–377 (DEITFLCLLAACSHGGLVKEAWHFFKSLKESGAEP), and 378–408 (KSEHYACMVDVLSRAGLVKDAHDFISEMPIK). The tract at residues 413–488 (MLGALLNGCI…IAGHSILDLD (76 aa)) is type E motif. The tract at residues 489–519 (GTRHRFIAHDKTHFHSDKIYAVLQLTGAWMN) is type E(+) motif.

This sequence belongs to the PPR family. PCMP-E subfamily.

The protein is Pentatricopeptide repeat-containing protein At5g08305 (PCMP-E105) of Arabidopsis thaliana (Mouse-ear cress).